Consider the following 440-residue polypeptide: Xaa-Pro dipeptidase (440 aa).

Positions 244, 255, 335, 380, and 419 each coordinate Mn(2+).

It belongs to the peptidase M24B family. Bacterial-type prolidase subfamily. Mn(2+) is required as a cofactor.

The enzyme catalyses Xaa-L-Pro dipeptide + H2O = an L-alpha-amino acid + L-proline. In terms of biological role, splits dipeptides with a prolyl residue in the C-terminal position. This chain is Xaa-Pro dipeptidase, found in Shewanella putrefaciens (strain CN-32 / ATCC BAA-453).